A 147-amino-acid polypeptide reads, in one-letter code: UPF0306 protein YhbP (147 aa).

The protein belongs to the UPF0306 family.

This is UPF0306 protein YhbP from Escherichia coli (strain K12 / MC4100 / BW2952).